The sequence spans 545 residues: CTP synthase (545 aa).

The segment at 1–266 is amidoligase domain; that stretch reads MTTNYIFVTG…DDYICKRFSL (266 aa). Ser-14 serves as a coordination point for CTP. UTP is bound at residue Ser-14. Residues 15 to 20 and Asp-72 contribute to the ATP site; that span reads SLGKGI. Positions 72 and 140 each coordinate Mg(2+). CTP is bound by residues 147 to 149, 187 to 192, and Lys-223; these read DIE and KTKPTQ. UTP is bound by residues 187-192 and Lys-223; that span reads KTKPTQ. An ATP-binding site is contributed by 239–241; it reads KDI. The region spanning 291-542 is the Glutamine amidotransferase type-1 domain; sequence TIGMVGKYVA…VKAAGAYQKR (252 aa). Gly-352 is a binding site for L-glutamine. Residue Cys-379 is the Nucleophile; for glutamine hydrolysis of the active site. L-glutamine-binding positions include 380–383, Glu-403, and Arg-470; that span reads LGMQ. Active-site residues include His-515 and Glu-517.

Belongs to the CTP synthase family. Homotetramer.

It carries out the reaction UTP + L-glutamine + ATP + H2O = CTP + L-glutamate + ADP + phosphate + 2 H(+). The catalysed reaction is L-glutamine + H2O = L-glutamate + NH4(+). The enzyme catalyses UTP + NH4(+) + ATP = CTP + ADP + phosphate + 2 H(+). It functions in the pathway pyrimidine metabolism; CTP biosynthesis via de novo pathway; CTP from UDP: step 2/2. With respect to regulation, allosterically activated by GTP, when glutamine is the substrate; GTP has no effect on the reaction when ammonia is the substrate. The allosteric effector GTP functions by stabilizing the protein conformation that binds the tetrahedral intermediate(s) formed during glutamine hydrolysis. Inhibited by the product CTP, via allosteric rather than competitive inhibition. Its function is as follows. Catalyzes the ATP-dependent amination of UTP to CTP with either L-glutamine or ammonia as the source of nitrogen. Regulates intracellular CTP levels through interactions with the four ribonucleotide triphosphates. In Pectobacterium atrosepticum (strain SCRI 1043 / ATCC BAA-672) (Erwinia carotovora subsp. atroseptica), this protein is CTP synthase.